A 258-amino-acid chain; its full sequence is uncharacterized protein (258 aa).

Helical transmembrane passes span 24–44 (IPLF…VNIF), 70–90 (PLVH…FLLM), 100–120 (LCTI…AYLI), 130–150 (VYVG…LNLF), 157–177 (LLNL…VLGL), and 181–201 (FSIT…FSFA). Histidine 188 is an active-site residue.

The protein belongs to the peptidase S54 family.

The protein localises to the golgi apparatus membrane. This is an uncharacterized protein from Schizosaccharomyces pombe (strain 972 / ATCC 24843) (Fission yeast).